Reading from the N-terminus, the 171-residue chain is Large ribosomal subunit protein bL17 (171 aa).

The tract at residues 130–171 is disordered; the sequence is PGYKKSKGKKATKAKGKKAKATPAAEAAAAATTEAAPAEEKK. Positions 133–149 are enriched in basic residues; it reads KKSKGKKATKAKGKKAK. Over residues 150–165 the composition is skewed to low complexity; sequence ATPAAEAAAAATTEAA.

Belongs to the bacterial ribosomal protein bL17 family. In terms of assembly, part of the 50S ribosomal subunit. Contacts protein L32.

The sequence is that of Large ribosomal subunit protein bL17 from Opitutus terrae (strain DSM 11246 / JCM 15787 / PB90-1).